The chain runs to 292 residues: NAD kinase (292 aa).

D72 serves as the catalytic Proton acceptor. NAD(+)-binding positions include 72–73 (DG), 146–147 (NE), H157, R174, D176, and 187–192 (TAYSLS).

The protein belongs to the NAD kinase family. A divalent metal cation is required as a cofactor.

Its subcellular location is the cytoplasm. The catalysed reaction is NAD(+) + ATP = ADP + NADP(+) + H(+). Involved in the regulation of the intracellular balance of NAD and NADP, and is a key enzyme in the biosynthesis of NADP. Catalyzes specifically the phosphorylation on 2'-hydroxyl of the adenosine moiety of NAD to yield NADP. The sequence is that of NAD kinase from Shewanella woodyi (strain ATCC 51908 / MS32).